Consider the following 804-residue polypeptide: Phenylalanine--tRNA ligase beta subunit (804 aa).

A tRNA-binding domain is found at 40 to 155; sequence GEGIKGVVIG…NDAETGSDAL (116 aa). Residues 409–484 form the B5 domain; sequence IEANNIHVSA…RLYGYDNIPS (76 aa). Residues Asp-462, Asp-468, Glu-471, and Glu-472 each coordinate Mg(2+). The region spanning 710 to 803 is the FDX-ACB domain; sequence PKYPSVTRDI…LEDTYQAVLR (94 aa).

This sequence belongs to the phenylalanyl-tRNA synthetase beta subunit family. Type 1 subfamily. In terms of assembly, tetramer of two alpha and two beta subunits. It depends on Mg(2+) as a cofactor.

It localises to the cytoplasm. It catalyses the reaction tRNA(Phe) + L-phenylalanine + ATP = L-phenylalanyl-tRNA(Phe) + AMP + diphosphate + H(+). The protein is Phenylalanine--tRNA ligase beta subunit (pheT) of Bacillus subtilis (strain 168).